We begin with the raw amino-acid sequence, 182 residues long: Dihydrofolate reductase (182 aa).

The 178-residue stretch at 3–180 (RFNLIVAVCE…IKFEYKILEK (178 aa)) folds into the DHFR domain. NADP(+) is bound by residues Ala-9 and 15–21 (GIGIRGD). Position 29–34 (29–34 (ELKYFS)) interacts with substrate. Position 53-55 (53-55 (RKT)) interacts with NADP(+). Arg-69 contacts substrate. Residues 75–77 (STT) and 113–120 (GGSGVYEE) contribute to the NADP(+) site.

The protein belongs to the dihydrofolate reductase family. In terms of assembly, monomer. Interacts with vg.

The catalysed reaction is (6S)-5,6,7,8-tetrahydrofolate + NADP(+) = 7,8-dihydrofolate + NADPH + H(+). It participates in cofactor biosynthesis; tetrahydrofolate biosynthesis; 5,6,7,8-tetrahydrofolate from 7,8-dihydrofolate: step 1/1. Its function is as follows. By interacting with vestigial (vg), may control genes involved in DNA replication. Key enzyme in folate metabolism. Catalyzes an essential reaction for de novo glycine and purine synthesis, and for DNA precursor synthesis. The protein is Dihydrofolate reductase (Dhfr) of Drosophila melanogaster (Fruit fly).